Consider the following 417-residue polypeptide: D-amino acid dehydrogenase (417 aa).

3–17 (AVVLGSGVVGLMSAW) serves as a coordination point for FAD.

It belongs to the DadA oxidoreductase family. The cofactor is FAD.

It catalyses the reaction a D-alpha-amino acid + A + H2O = a 2-oxocarboxylate + AH2 + NH4(+). Functionally, oxidative deamination of D-amino acids. The chain is D-amino acid dehydrogenase from Vibrio vulnificus (strain YJ016).